A 357-amino-acid chain; its full sequence is DNA integrity scanning protein DisA (357 aa).

The DAC domain maps to 8 to 146; the sequence is VKSMINILQL…GNLRYTLKDI (139 aa). Residues Gly75, Leu93, and 106–110 each bind ATP; that span reads MRHRT.

Belongs to the DisA family. Homooctamer. Mg(2+) serves as cofactor.

The catalysed reaction is 2 ATP = 3',3'-c-di-AMP + 2 diphosphate. Participates in a DNA-damage check-point that is active prior to asymmetric division when DNA is damaged. DisA forms globular foci that rapidly scan along the chromosomes during sporulation, searching for lesions. When a lesion is present, DisA pauses at the lesion site. This triggers a cellular response that culminates in a temporary block in sporulation initiation. Its function is as follows. Also has diadenylate cyclase activity, catalyzing the condensation of 2 ATP molecules into cyclic di-AMP (c-di-AMP). c-di-AMP acts as a signaling molecule that couples DNA integrity with progression of sporulation. The rise in c-di-AMP level generated by DisA while scanning the chromosome, operates as a positive signal that advances sporulation; upon encountering a lesion, the DisA focus arrests at the damaged site and halts c-di-AMP synthesis. The polypeptide is DNA integrity scanning protein DisA (Bacillus cereus (strain ATCC 14579 / DSM 31 / CCUG 7414 / JCM 2152 / NBRC 15305 / NCIMB 9373 / NCTC 2599 / NRRL B-3711)).